Here is a 172-residue protein sequence, read N- to C-terminus: 3-hydroxydecanoyl-[acyl-carrier-protein] dehydratase (172 aa).

The active site involves His70.

The protein belongs to the thioester dehydratase family. FabA subfamily. Homodimer.

The protein resides in the cytoplasm. The enzyme catalyses a (3R)-hydroxyacyl-[ACP] = a (2E)-enoyl-[ACP] + H2O. It catalyses the reaction (3R)-hydroxydecanoyl-[ACP] = (2E)-decenoyl-[ACP] + H2O. The catalysed reaction is (2E)-decenoyl-[ACP] = (3Z)-decenoyl-[ACP]. The protein operates within lipid metabolism; fatty acid biosynthesis. Necessary for the introduction of cis unsaturation into fatty acids. Catalyzes the dehydration of (3R)-3-hydroxydecanoyl-ACP to E-(2)-decenoyl-ACP and then its isomerization to Z-(3)-decenoyl-ACP. Can catalyze the dehydratase reaction for beta-hydroxyacyl-ACPs with saturated chain lengths up to 16:0, being most active on intermediate chain length. This chain is 3-hydroxydecanoyl-[acyl-carrier-protein] dehydratase, found in Xylella fastidiosa (strain M12).